The sequence spans 152 residues: Prostaglandin E synthase (152 aa).

At 1-12 (MPAHSLVMSSPA) the chain is on the lumenal side. A helical transmembrane segment spans residues 13 to 41 (LPAFLLCSTLLVIKMYVVAIITGQVRLRK). Arg38 provides a ligand contact to glutathione. Topologically, residues 42–60 (KAFANPEDALRHGGPQYCR) are cytoplasmic. A helical transmembrane segment spans residues 61-90 (SDPDVERCLRAHRNDMETIYPFLFLGFVYS). 73–77 (RNDME) contributes to the glutathione binding site. Over 91-95 (FLGPN) the chain is Lumenal. Residues 96–119 (PFVAWMHFLVFLVGRVAHTVAYLG) traverse the membrane as a helical segment. Residues His113 and Tyr117 each contribute to the glutathione site. Topologically, residues 120–123 (KLRA) are cytoplasmic. Residues 124–152 (PIRSVTYTLAQLPCASMALQILWEAARHL) form a helical membrane-spanning segment. Glutathione is bound at residue 126–130 (RSVTY).

Belongs to the MAPEG family. In terms of assembly, homotrimer. It depends on glutathione as a cofactor.

Its subcellular location is the membrane. It localises to the cytoplasm. The protein localises to the perinuclear region. The catalysed reaction is prostaglandin H2 = prostaglandin E2. It carries out the reaction 2-glyceryl-prostaglandin H2 = 2-glyceryl-prostaglandin E2. The enzyme catalyses prostaglandin G2 = (15S)-15-hydroperoxy-prostaglandin E2. It catalyses the reaction 1-chloro-2,4-dinitrobenzene + glutathione = 2,4-dinitrophenyl-S-glutathione + chloride + H(+). The catalysed reaction is (5S)-hydroperoxy-(6E,8Z,11Z,14Z)-eicosatetraenoate + 2 glutathione = (5S)-hydroxy-(6E,8Z,11Z,14Z)-eicosatetraenoate + glutathione disulfide + H2O. It participates in lipid metabolism; prostaglandin biosynthesis. With respect to regulation, induced by interleukin IL1B. Terminal enzyme of the cyclooxygenase (COX)-2-mediated prostaglandin E2 (PGE2) biosynthetic pathway. Catalyzes the glutathione-dependent oxidoreduction of prostaglandin endoperoxide H2 (PGH2) to prostaglandin E2 (PGE2) in response to inflammatory stimuli. Plays a key role in inflammation response, fever and pain. Also catalyzes the oxidoreduction of endocannabinoids into prostaglandin glycerol esters and PGG2 into 15-hydroperoxy-PGE2. In addition, displays low glutathione transferase and glutathione-dependent peroxidase activities, toward 1-chloro-2,4-dinitrobenzene and 5-hydroperoxyicosatetraenoic acid (5-HPETE), respectively. The sequence is that of Prostaglandin E synthase (PTGES) from Homo sapiens (Human).